The following is a 472-amino-acid chain: Na(+)/H(+) antiporter NhaA 1 (472 aa).

11 helical membrane passes run 34–54 (TASI…NSQW), 86–106 (GLMV…CLVG), 116–136 (LVIA…AGVA), 146–166 (GWGI…ALLG), 175–195 (VTLS…IGLF), 203–223 (TSLM…VLGF), 227–247 (IFYL…GVHA), 324–344 (PVSL…ALPD), 353–373 (VVFI…ISVF), 394–414 (VFAL…IASL), and 428–448 (LGIL…FLMI).

The protein belongs to the NhaA Na(+)/H(+) (TC 2.A.33) antiporter family.

It localises to the cell inner membrane. It carries out the reaction Na(+)(in) + 2 H(+)(out) = Na(+)(out) + 2 H(+)(in). Na(+)/H(+) antiporter that extrudes sodium in exchange for external protons. In Pseudoalteromonas atlantica (strain T6c / ATCC BAA-1087), this protein is Na(+)/H(+) antiporter NhaA 1.